Consider the following 1004-residue polypeptide: Translation initiation factor IF-2 (1004 aa).

The disordered stretch occupies residues 36–393; it reads SSTIEPPVVK…RQKRNEYESM (358 aa). Low complexity-rich tracts occupy residues 62-157 and 173-183; these read AAKP…AKPA and AAKPGAEAPRP. Pro residues-rich tracts occupy residues 184 to 196 and 219 to 236; these read GGMP…PAPK and PRPG…PGGG. Composition is skewed to gly residues over residues 237-249 and 261-277; these read PRPQ…GGQR and GNRG…GPRP. Residues 279-303 show a composition bias toward low complexity; sequence GGPRPQGGSRPQGGSAQGAQGAPSQ. Over residues 330–373 the composition is skewed to gly residues; sequence GKGGRGGQAGGGAGGGFNRGGGTGGGAGRGGRRGGTAGAFGRPG. Residues 377 to 386 show a composition bias toward basic residues; that stretch reads RRGRKSKRQK. One can recognise a tr-type G domain in the interval 499–671; it reads KRPPVVTVMG…VCLTADAELD (173 aa). The G1 stretch occupies residues 508–515; it reads GHVDHGKT. 508–515 serves as a coordination point for GTP; the sequence is GHVDHGKT. Residues 533–537 are G2; the sequence is GITQG. Positions 558 to 561 are G3; the sequence is DTPG. Residues 558-562 and 612-615 contribute to the GTP site; these read DTPGH and NKID. The segment at 612-615 is G4; sequence NKID. Positions 648 to 650 are G5; it reads SAK.

This sequence belongs to the TRAFAC class translation factor GTPase superfamily. Classic translation factor GTPase family. IF-2 subfamily.

Its subcellular location is the cytoplasm. One of the essential components for the initiation of protein synthesis. Protects formylmethionyl-tRNA from spontaneous hydrolysis and promotes its binding to the 30S ribosomal subunits. Also involved in the hydrolysis of GTP during the formation of the 70S ribosomal complex. The chain is Translation initiation factor IF-2 from Corynebacterium glutamicum (strain ATCC 13032 / DSM 20300 / JCM 1318 / BCRC 11384 / CCUG 27702 / LMG 3730 / NBRC 12168 / NCIMB 10025 / NRRL B-2784 / 534).